The sequence spans 220 residues: Deoxyribose-phosphate aldolase (220 aa).

Asp92 functions as the Proton donor/acceptor in the catalytic mechanism. The active-site Schiff-base intermediate with acetaldehyde is Lys155. Lys184 functions as the Proton donor/acceptor in the catalytic mechanism.

Belongs to the DeoC/FbaB aldolase family. DeoC type 1 subfamily.

It is found in the cytoplasm. The catalysed reaction is 2-deoxy-D-ribose 5-phosphate = D-glyceraldehyde 3-phosphate + acetaldehyde. Its pathway is carbohydrate degradation; 2-deoxy-D-ribose 1-phosphate degradation; D-glyceraldehyde 3-phosphate and acetaldehyde from 2-deoxy-alpha-D-ribose 1-phosphate: step 2/2. In terms of biological role, catalyzes a reversible aldol reaction between acetaldehyde and D-glyceraldehyde 3-phosphate to generate 2-deoxy-D-ribose 5-phosphate. The sequence is that of Deoxyribose-phosphate aldolase from Symbiobacterium thermophilum (strain DSM 24528 / JCM 14929 / IAM 14863 / T).